Consider the following 234-residue polypeptide: Sugar fermentation stimulation protein A (234 aa).

Positions 201–220 (LLSEAQQRGVEILAYKAEIS) form a DNA-binding region, H-T-H motif.

It belongs to the SfsA family.

Its function is as follows. Binds to DNA non-specifically. Could be a regulatory factor involved in maltose metabolism. In Shigella sonnei (strain Ss046), this protein is Sugar fermentation stimulation protein A.